Consider the following 559-residue polypeptide: Prolyl 4-hydroxylase subunit alpha-1 (559 aa).

The first 16 residues, 1–16 (MRLALLVLATIGYAVA), serve as a signal peptide directing secretion. Asn-158 carries an N-linked (GlcNAc...) asparagine glycan. Positions 404–512 (TAEELQIANY…KWVSNKWIHE (109 aa)) constitute a Fe2OG dioxygenase domain. The Fe cation site is built by His-422, Asp-424, and His-493. Lys-503 contacts 2-oxoglutarate.

Belongs to the P4HA family. As to quaternary structure, heterotetramer of two alpha chains and two beta chains. Exists either as a phy-1(2)/pdi-2(2) tetramer or as a phy-1/phy-2/pdi-2(2) tetramer. Requires Fe(2+) as cofactor. L-ascorbate serves as cofactor.

Its subcellular location is the endoplasmic reticulum lumen. It catalyses the reaction L-prolyl-[collagen] + 2-oxoglutarate + O2 = trans-4-hydroxy-L-prolyl-[collagen] + succinate + CO2. Its function is as follows. Catalyzes the post-translational formation of 4-hydroxyproline in -Xaa-Pro-Gly- sequences in collagens and other proteins. The sequence is that of Prolyl 4-hydroxylase subunit alpha-1 (dpy-18) from Caenorhabditis elegans.